The sequence spans 235 residues: Glucosamine-6-phosphate deaminase (235 aa).

Asp-62 (proton acceptor; for enolization step) is an active-site residue. The For ring-opening step role is filled by Asn-128. His-130 (proton acceptor; for ring-opening step) is an active-site residue. Glu-135 serves as the catalytic For ring-opening step.

This sequence belongs to the glucosamine/galactosamine-6-phosphate isomerase family. NagB subfamily.

It catalyses the reaction alpha-D-glucosamine 6-phosphate + H2O = beta-D-fructose 6-phosphate + NH4(+). Its pathway is amino-sugar metabolism; N-acetylneuraminate degradation; D-fructose 6-phosphate from N-acetylneuraminate: step 5/5. Functionally, catalyzes the reversible isomerization-deamination of glucosamine 6-phosphate (GlcN6P) to form fructose 6-phosphate (Fru6P) and ammonium ion. This Streptococcus sanguinis (strain SK36) protein is Glucosamine-6-phosphate deaminase.